A 200-amino-acid chain; its full sequence is 2,3-bisphosphoglycerate-dependent phosphoglycerate mutase (200 aa).

The Tele-phosphohistidine intermediate role is filled by His9. The active site involves His142.

This sequence belongs to the phosphoglycerate mutase family. In terms of assembly, homodimer.

It carries out the reaction (2R)-2-phosphoglycerate = (2R)-3-phosphoglycerate. Its pathway is carbohydrate degradation; glycolysis; pyruvate from D-glyceraldehyde 3-phosphate: step 3/5. Catalyzes the interconversion of 2-phosphoglycerate and 3-phosphoglycerate. The chain is 2,3-bisphosphoglycerate-dependent phosphoglycerate mutase from Thermoplasma acidophilum (strain ATCC 25905 / DSM 1728 / JCM 9062 / NBRC 15155 / AMRC-C165).